A 282-amino-acid polypeptide reads, in one-letter code: Bifunctional protein FolD (282 aa).

Residues 163–165 (NRS), Thr-188, and Ile-229 contribute to the NADP(+) site.

This sequence belongs to the tetrahydrofolate dehydrogenase/cyclohydrolase family. Homodimer.

The enzyme catalyses (6R)-5,10-methylene-5,6,7,8-tetrahydrofolate + NADP(+) = (6R)-5,10-methenyltetrahydrofolate + NADPH. It carries out the reaction (6R)-5,10-methenyltetrahydrofolate + H2O = (6R)-10-formyltetrahydrofolate + H(+). The protein operates within one-carbon metabolism; tetrahydrofolate interconversion. Its function is as follows. Catalyzes the oxidation of 5,10-methylenetetrahydrofolate to 5,10-methenyltetrahydrofolate and then the hydrolysis of 5,10-methenyltetrahydrofolate to 10-formyltetrahydrofolate. The chain is Bifunctional protein FolD from Malacoplasma penetrans (strain HF-2) (Mycoplasma penetrans).